The sequence spans 403 residues: Succinoglycan biosynthesis protein ExoL (403 aa).

It localises to the cytoplasm. It participates in glycan metabolism; exopolysaccharide biosynthesis. Essential for succinoglycan (EPS I) synthesis and nodule infection. Glycosyltransferase needed for the addition of the third sugar (glucose), catalyzes the formation of a beta-1,4 linkage between the second and third sugars. This is Succinoglycan biosynthesis protein ExoL (exoL) from Rhizobium meliloti (strain 1021) (Ensifer meliloti).